Here is a 505-residue protein sequence, read N- to C-terminus: Ookinete surface protein PIMMS43 (505 aa).

A signal peptide spans 1–24 (MQKRIYVSLFFLVFFLSKISVVLS). Residues 188-221 (ERRKKKLDDEQKRQKDLEDTNRKENDEEQSYKKL) form a disordered region. A helical membrane pass occupies residues 485–505 (SSIYSSIKYFFLLMLFVIYIL).

In terms of assembly, monomer. May form multimers with an unknown protein(s).

It is found in the membrane. Its function is as follows. Involved in ookinete evasion of the mosquito complement-like response, oocyst maturation, sporozoite development and infectivity. The sequence is that of Ookinete surface protein PIMMS43 from Plasmodium falciparum (isolate 3D7).